The following is a 602-amino-acid chain: Type II restriction enzyme StsI (602 aa).

The enzyme catalyses Endonucleolytic cleavage of DNA to give specific double-stranded fragments with terminal 5'-phosphates.. Functionally, an S subtype restriction enzyme that recognizes the double-stranded sequences 5'-GGATG-3' and 3'-CATCC-5' and cleaves respectively 15 bases after G-1 and 14 bases before C-1. This chain is Type II restriction enzyme StsI (stsIR), found in Streptococcus sanguinis.